The sequence spans 197 residues: 3-isopropylmalate dehydratase small subunit (197 aa).

The protein belongs to the LeuD family. LeuD type 1 subfamily. Heterodimer of LeuC and LeuD.

The enzyme catalyses (2R,3S)-3-isopropylmalate = (2S)-2-isopropylmalate. The protein operates within amino-acid biosynthesis; L-leucine biosynthesis; L-leucine from 3-methyl-2-oxobutanoate: step 2/4. Functionally, catalyzes the isomerization between 2-isopropylmalate and 3-isopropylmalate, via the formation of 2-isopropylmaleate. This chain is 3-isopropylmalate dehydratase small subunit, found in Mycolicibacterium vanbaalenii (strain DSM 7251 / JCM 13017 / BCRC 16820 / KCTC 9966 / NRRL B-24157 / PYR-1) (Mycobacterium vanbaalenii).